The primary structure comprises 594 residues: MDRISNLPNEIICHIVSFLSAKEAAFASILSKRWRNLFTIVIKLQFDDSVKNEGSLKDFVDGVLALPTSSRVRSCSLECRREFDPTHYDDFNRCICALLKRGILDLKLDICAGRRYSLPLEVFTCKTLVKLELGSDFGGFVVDLVPEDAFLPALETLLLNYIRFKDLRRCAFEKLLSACLVLKELVIHNMEWERWKWSGNISSPTLERLTISHVDLYECEFTRINLDTPNLTYLELSDAVPDDYPIVNLDSLVEVKLDLTLMVDHKYHGYVDDNDTISSNPTNLINGLRNVEIMNLQSPNTFQAFSYFHEAIPVFKNLYHLTITNNDTVIGFCWEFLPFVIKKCPNLKTLVIDGPLHYNEDRPKSVCHCLSGYSFLLSCPLEVLQITDYSGTPGEVEQLKHFLEKLSGLKLVKLHSLTRFGSDKKKLLMLPRASSKCKIKHYDSLENALLPSLKTLILDSVKFYDRCGCCAFQKLLSACPVLVESVMRNLEWEDWEWSGCASSQTLERLTIDHRYWAEHNLESFTFDTPSLTYLDYNAHVPGSYPTVNLDSLVEAKLNLGFTTDLVEDDDDPFTSDPTNLIKGLRNVEILRLWM.

An F-box domain is found at 1–49 (MDRISNLPNEIICHIVSFLSAKEAAFASILSKRWRNLFTIVIKLQFDDS). 15 LRR repeats span residues 103 to 125 (ILDL…VFTC), 128 to 151 (LVKL…DAFL), 152 to 174 (PALE…AFEK), 203 to 218 (SPTL…DLYE), 219 to 242 (CEFT…AVPD), 249 to 272 (LDSL…GYVD), 288 to 314 (LRNV…AIPV), 315 to 339 (FKNL…FLPF), 344 to 369 (CPNL…VCHC), 403 to 414 (LEKLSGLKLVKL), 415 to 437 (HSLT…SSKC), 450 to 474 (LPSL…AFQK), 503 to 518 (SQTL…YWAE), 519 to 541 (HNLE…AHVP), and 584 to 594 (LRNVEILRLWM).

This is F-box/LRR-repeat protein At3g58980 from Arabidopsis thaliana (Mouse-ear cress).